The chain runs to 520 residues: Gamma aminobutyrate transaminase 3, chloroplastic (520 aa).

A chloroplast-targeting transit peptide spans 1–44 (MAKITSLIGSGIVAATNQVGPHVKHIPAVGNLQKQIVSDQIQVR). Position 172 to 173 (172 to 173 (GS)) interacts with pyridoxal 5'-phosphate. Residue Y205 participates in substrate binding. D312 contributes to the pyridoxal 5'-phosphate binding site. K341 provides a ligand contact to substrate. An N6-(pyridoxal phosphate)lysine modification is found at K341.

Belongs to the class-III pyridoxal-phosphate-dependent aminotransferase family. As to expression, expressed in leaves, roots, stems, flowers and fruits.

The protein resides in the plastid. Its subcellular location is the chloroplast. It carries out the reaction 4-aminobutanoate + pyruvate = succinate semialdehyde + L-alanine. It catalyses the reaction 4-aminobutanoate + glyoxylate = succinate semialdehyde + glycine. In terms of biological role, transaminase that degrades gamma-amino butyric acid (GABA) and uses pyruvate or glyoxylate as amino-group acceptor. Cannot use beta-alanine, ornithine, acetylornithine, serine, glycine, asparagine, glutamine, glutamate, valine, leucine, isoleucine, methionine, phenylalanine, histidine, lysine, arginine, aspartate, threonine, tyrosine, tryptophan, proline, or cysteine as amino donors. The protein is Gamma aminobutyrate transaminase 3, chloroplastic (GABA-TP3) of Solanum lycopersicum (Tomato).